The sequence spans 450 residues: UDP-N-acetylmuramoylalanine--D-glutamate ligase (450 aa).

Residue Gly-118 to Thr-124 participates in ATP binding.

It belongs to the MurCDEF family.

The protein resides in the cytoplasm. The catalysed reaction is UDP-N-acetyl-alpha-D-muramoyl-L-alanine + D-glutamate + ATP = UDP-N-acetyl-alpha-D-muramoyl-L-alanyl-D-glutamate + ADP + phosphate + H(+). It participates in cell wall biogenesis; peptidoglycan biosynthesis. In terms of biological role, cell wall formation. Catalyzes the addition of glutamate to the nucleotide precursor UDP-N-acetylmuramoyl-L-alanine (UMA). This is UDP-N-acetylmuramoylalanine--D-glutamate ligase from Halalkalibacterium halodurans (strain ATCC BAA-125 / DSM 18197 / FERM 7344 / JCM 9153 / C-125) (Bacillus halodurans).